The chain runs to 211 residues: tRNA (guanine-N(7)-)-methyltransferase (211 aa).

4 residues coordinate S-adenosyl-L-methionine: glutamate 43, glutamate 68, aspartate 95, and aspartate 117. Aspartate 117 is a catalytic residue. Residues lysine 121, aspartate 153, and 190–193 each bind substrate; that span reads TEYE.

It belongs to the class I-like SAM-binding methyltransferase superfamily. TrmB family.

It catalyses the reaction guanosine(46) in tRNA + S-adenosyl-L-methionine = N(7)-methylguanosine(46) in tRNA + S-adenosyl-L-homocysteine. It participates in tRNA modification; N(7)-methylguanine-tRNA biosynthesis. Functionally, catalyzes the formation of N(7)-methylguanine at position 46 (m7G46) in tRNA. This is tRNA (guanine-N(7)-)-methyltransferase from Staphylococcus carnosus (strain TM300).